A 728-amino-acid polypeptide reads, in one-letter code: Catalase-peroxidase 1 (728 aa).

The first 22 residues, 1 to 22 (MDKTQSSQGKCPVMHGANSAVA), serve as a signal peptide directing secretion. Positions 97-225 (WHSAGTYRVA…LAAVMMGLIY (129 aa)) form a cross-link, tryptophyl-tyrosyl-methioninium (Trp-Tyr) (with M-251). The active-site Proton acceptor is the His98. Positions 225-251 (YVNPEGVDGKPDPLRTAQDVRVTFARM) form a cross-link, tryptophyl-tyrosyl-methioninium (Tyr-Met) (with W-97). His266 is a heme b binding site.

It belongs to the peroxidase family. Peroxidase/catalase subfamily. In terms of assembly, homodimer or homotetramer. Requires heme b as cofactor. In terms of processing, formation of the three residue Trp-Tyr-Met cross-link is important for the catalase, but not the peroxidase activity of the enzyme.

It catalyses the reaction H2O2 + AH2 = A + 2 H2O. The enzyme catalyses 2 H2O2 = O2 + 2 H2O. Its function is as follows. Bifunctional enzyme with both catalase and broad-spectrum peroxidase activity. This chain is Catalase-peroxidase 1, found in Shewanella sp. (strain ANA-3).